Here is a 309-residue protein sequence, read N- to C-terminus: NADH-quinone oxidoreductase subunit C (309 aa).

The tract at residues Leu198–Glu309 is disordered. Residues Thr220–Lys230 show a composition bias toward basic and acidic residues. A compositionally biased stretch (low complexity) spans Asp246–Thr261.

It belongs to the complex I 30 kDa subunit family. As to quaternary structure, NDH-1 is composed of 14 different subunits. Subunits NuoB, C, D, E, F, and G constitute the peripheral sector of the complex.

It is found in the cell inner membrane. The enzyme catalyses a quinone + NADH + 5 H(+)(in) = a quinol + NAD(+) + 4 H(+)(out). NDH-1 shuttles electrons from NADH, via FMN and iron-sulfur (Fe-S) centers, to quinones in the respiratory chain. The immediate electron acceptor for the enzyme in this species is believed to be ubiquinone. Couples the redox reaction to proton translocation (for every two electrons transferred, four hydrogen ions are translocated across the cytoplasmic membrane), and thus conserves the redox energy in a proton gradient. This is NADH-quinone oxidoreductase subunit C from Novosphingobium aromaticivorans (strain ATCC 700278 / DSM 12444 / CCUG 56034 / CIP 105152 / NBRC 16084 / F199).